A 339-amino-acid polypeptide reads, in one-letter code: Glyceraldehyde-3-phosphate dehydrogenase (339 aa).

NAD(+) is bound by residues 12 to 13 (RI), Asp-34, Arg-78, and Thr-120. D-glyceraldehyde 3-phosphate-binding positions include 149-151 (SCT), Thr-180, 209-210 (TG), and Arg-232. Cys-150 acts as the Nucleophile in catalysis. NAD(+) is bound at residue Asn-319.

It belongs to the glyceraldehyde-3-phosphate dehydrogenase family. Homotetramer.

Its subcellular location is the cytoplasm. The enzyme catalyses D-glyceraldehyde 3-phosphate + phosphate + NAD(+) = (2R)-3-phospho-glyceroyl phosphate + NADH + H(+). The protein operates within carbohydrate degradation; glycolysis; pyruvate from D-glyceraldehyde 3-phosphate: step 1/5. In terms of biological role, catalyzes the oxidative phosphorylation of glyceraldehyde 3-phosphate (G3P) to 1,3-bisphosphoglycerate (BPG) using the cofactor NAD. The first reaction step involves the formation of a hemiacetal intermediate between G3P and a cysteine residue, and this hemiacetal intermediate is then oxidized to a thioester, with concomitant reduction of NAD to NADH. The reduced NADH is then exchanged with the second NAD, and the thioester is attacked by a nucleophilic inorganic phosphate to produce BPG. In Haemophilus influenzae (strain ATCC 51907 / DSM 11121 / KW20 / Rd), this protein is Glyceraldehyde-3-phosphate dehydrogenase (gapA).